A 308-amino-acid chain; its full sequence is MTGKHVAVLMGGFSSERPVSLSSGTACAATLEERGYCVTRIDVDRNVASVLAELKPDVAFNALHGPFGEDGAIQGVLEYLQIPYTHSGVLASALAMDKDRAKKVAAAAGVAVASSLLLNRFEIGTEHPMEPPYVVKPVREGSSFGVVIVKEDQTHPPQIISSAEWNYGAEVLVEKYIPGRELTCAVMGDRVMDVCEIIPVGHQFYDYDSKYVAGASSHVCPAKILPNIYQKIQTMALTAHRAIGCRGVSRSDFRFDDRFSDDGEVIWLEINTQPGMTPTSLVPDIAKAAGISFGELLSWMVEDASCLR.

An ATP-grasp domain is found at 102-302 (KKVAAAAGVA…FGELLSWMVE (201 aa)). ATP is bound at residue 128 to 183 (PMEPPYVVKPVREGSSFGVVIVKEDQTHPPQIISSAEWNYGAEVLVEKYIPGRELT). 3 residues coordinate Mg(2+): Asp-252, Glu-269, and Asn-271.

It belongs to the D-alanine--D-alanine ligase family. Mg(2+) serves as cofactor. Mn(2+) is required as a cofactor.

It is found in the cytoplasm. The enzyme catalyses 2 D-alanine + ATP = D-alanyl-D-alanine + ADP + phosphate + H(+). It functions in the pathway cell wall biogenesis; peptidoglycan biosynthesis. Its function is as follows. Cell wall formation. This chain is D-alanine--D-alanine ligase, found in Brucella anthropi (strain ATCC 49188 / DSM 6882 / CCUG 24695 / JCM 21032 / LMG 3331 / NBRC 15819 / NCTC 12168 / Alc 37) (Ochrobactrum anthropi).